The primary structure comprises 469 residues: Interstitial collagenase (469 aa).

The first 18 residues, 1 to 18 (MLSLPLLLLLLWGMGSHS), serve as a signal peptide directing secretion. The propeptide at 19 to 99 (FPTVPSETRE…PRCGVPDVAE (81 aa)) is activation peptide. Positions 90-97 (PRCGVPDV) match the Cysteine switch motif. Cys92 serves as a coordination point for Zn(2+). 2 residues coordinate Ca(2+): Asp124 and Asp158. Zn(2+) is bound by residues His168 and Asp170. The Ca(2+) site is built by Asp175, Gly176, Gly178, and Asn180. Zn(2+) is bound at residue His183. Residues Arg190, Gly192, and Asp194 each contribute to the Ca(2+) site. Residue His196 coordinates Zn(2+). Ca(2+) contacts are provided by Asp198, Glu199, and Glu201. Residue His218 coordinates Zn(2+). The active site involves Glu219. The Zn(2+) site is built by His222 and His228. The residue at position 274 (Thr274) is a Phosphothreonine. Hemopexin repeat units follow at residues 275 to 324 (PEVC…WPQL), 325 to 371 (PNGL…FGFP), 374 to 422 (VKNI…FPGI), and 423 to 466 (GDKV…WFNC). A disulfide bridge connects residues Cys278 and Cys466. The Ca(2+) site is built by Asp285 and Gln329. Tyr360 is subject to Phosphotyrosine; by PKDCC. Residues Asp378 and Asp427 each coordinate Ca(2+).

It belongs to the peptidase M10A family. Requires Ca(2+) as cofactor. Zn(2+) serves as cofactor. Post-translationally, tyrosine phosphorylated in platelets by PKDCC/VLK.

It localises to the secreted. It is found in the extracellular space. Its subcellular location is the extracellular matrix. The enzyme catalyses Cleavage of the triple helix of collagen at about three-quarters of the length of the molecule from the N-terminus, at 775-Gly-|-Ile-776 in the alpha1(I) chain. Cleaves synthetic substrates and alpha-macroglobulins at bonds where P1' is a hydrophobic residue.. Can be activated without removal of the activation peptide. Functionally, cleaves collagens of types I, II, and III at one site in the helical domain. Also cleaves collagens of types VII and X. The polypeptide is Interstitial collagenase (MMP1) (Equus caballus (Horse)).